Here is a 134-residue protein sequence, read N- to C-terminus: Lymphocyte antigen 6 complex locus protein G6d (134 aa).

The signal sequence occupies residues 1 to 19; it reads MNSQLIGILFSALLGAALG. One can recognise a UPAR/Ly6 domain in the interval 22-121; it reads MRCYDCGGGP…ASSSTPLCIL (100 aa). Cystine bridges form between Cys24-Cys48, Cys27-Cys35, Cys42-Cys76, Cys82-Cys101, and Cys102-Cys107. An O-linked (GalNAc...) threonine glycan is attached at Thr68. A lipid anchor (GPI-anchor amidated asparagine) is attached at Asn108. Positions 109–134 are cleaved as a propeptide — removed in mature form; sequence GAVASSSTPLCILAAVTTLAWLLSGQ.

In terms of assembly, homodimer. In terms of processing, O-glycosylated.

The protein localises to the cell membrane. The protein is Lymphocyte antigen 6 complex locus protein G6d (Ly6g6d) of Rattus norvegicus (Rat).